Here is a 915-residue protein sequence, read N- to C-terminus: Transferrin-binding protein A (915 aa).

The N-terminal stretch at 1–24 (MQQQHLFRFNILCLSLMTALPAYA) is a signal peptide. Topologically, residues 25–187 (ENVQAGQAQE…ADDVIGEGRQ (163 aa)) are periplasmic. Positions 38–45 (DTIQVKAK) match the TonB box motif. A TBDR plug domain is found at 51–176 (RDNEVTGLGK…LAGSVAFQTK (126 aa)). The interval 121–139 (SYTAQAALGGTRTAGSSGA) is plug loop, interacts with transferrin. Residues 187-915 (QWGIQSKTAY…NYTFSLEMKF (729 aa)) form the TBDR beta-barrel domain. A beta stranded membrane pass occupies residues 188–197 (WGIQSKTAYS). The Extracellular portion of the chain corresponds to 198–203 (GKNRGL). Residues 204-213 (TQSIALAGRI) form a beta stranded membrane-spanning segment. At 214–215 (GG) the chain is on the periplasmic side. The beta stranded transmembrane segment at 216–225 (AEALLIHTGR) threads the bilayer. Residues 226–309 (RAGEIRAHED…FLADPLSYES (84 aa)) are Extracellular-facing. Residues 310 to 319 (RSWLFRPGFR) traverse the membrane as a beta stranded segment. Residues 320–324 (FENKR) are Periplasmic-facing. Residues 325 to 334 (HYIGGILEHT) traverse the membrane as a beta stranded segment. Topologically, residues 335–406 (QQTFDTRDMT…VFYDETHTKS (72 aa)) are extracellular. The interval 351 to 361 (KAVFDANKKQA) is L3 helix finger, interacts with transferrin. A beta stranded membrane pass occupies residues 407–415 (RYGLEYVYT). Residues 416 to 423 (NADKDTWA) are Periplasmic-facing. The chain crosses the membrane as a beta stranded span at residues 424–433 (DYARLSYDRQ). Topologically, residues 434–478 (GIGLDNHFQQTHCSADGSDKYCRPSADKPFSYYKSDRVIYGESHR) are extracellular. The chain crosses the membrane as a beta stranded span at residues 479–488 (LLQAAFKKSF). The Periplasmic segment spans residues 489–494 (DTAKIR). Residues 495–504 (HNLSVNLGFD) form a beta stranded membrane-spanning segment. The Extracellular segment spans residues 505-583 (RFGSNLRHQD…PRSINGKSYY (79 aa)). Residues 523-542 (AYSSNTPPQNNGKKISPNGS) form a disordered region. Residues 584-592 (AAVRDNVRL) form a beta stranded membrane-spanning segment. At 593 to 594 (GR) the chain is on the periplasmic side. The chain crosses the membrane as a beta stranded span at residues 595–603 (WADVGAGLR). Residues 604–623 (YDYRSTHSDDGSVSTGTHRT) are Extracellular-facing. The chain crosses the membrane as a beta stranded span at residues 624–633 (LSWNAGIVLK). Topologically, residues 634 to 637 (PTDW) are periplasmic. The beta stranded transmembrane segment at 638–647 (LDLTYRTSTG) threads the bilayer. Residues 648–675 (FRLPSFAEMYGWRAGVQSKAVKIDPEKS) are Extracellular-facing. A beta stranded membrane pass occupies residues 676-685 (FNKEAGIVFK). Residues 686 to 689 (GDFG) lie on the Periplasmic side of the membrane. The beta stranded transmembrane segment at 690-699 (NLEASWFNNA) threads the bilayer. The Extracellular segment spans residues 700-733 (YRDLIVRGYEAQIKDGKEEAKGDPAYLNAQSARI). Residues 734-743 (TGINILGKID) traverse the membrane as a beta stranded segment. At 744–755 (WNGVWDKLPEGW) the chain is on the periplasmic side. Residues 756–765 (YSTFAYNRVR) form a beta stranded membrane-spanning segment. The Extracellular segment spans residues 766–790 (VRDIKKRADRTDIQSHLFDAIQPSR). The chain crosses the membrane as a beta stranded span at residues 791–799 (YVVGLGYDQ). Over 800 to 802 (PEG) the chain is Periplasmic. A beta stranded transmembrane segment spans residues 803–811 (KWGVNGMLT). Over 812-845 (YSKAKEITELLGSRALLNGNSRNTKATARRTRPW) the chain is Extracellular. Residues 846 to 855 (YIVDVSGYYT) form a beta stranded membrane-spanning segment. Residues 856-860 (VKKHF) lie on the Periplasmic side of the membrane. The chain crosses the membrane as a beta stranded span at residues 861–870 (TLRAGVYNLL). Over 871–905 (NYRYVTWENVRQTAGGAVNQHKNVGVYNRYAAPGR) the chain is Extracellular. Residues 898–915 (NRYAAPGRNYTFSLEMKF) carry the TonB C-terminal box motif. A beta stranded transmembrane segment spans residues 906 to 915 (NYTFSLEMKF).

It belongs to the TonB-dependent receptor family. In terms of assembly, binds both human apo- and holo-transferrin (TF), via the TF C-terminus. Forms a large complex with TF and TbpB.

It localises to the cell outer membrane. Neisseria acquires iron by extracting it from serum transferrin (TF) in its human host. Acts as a TF receptor and is required for TF utilization. Binds both apo- and holo-TF, via the TF C-terminus. The sequence is that of Transferrin-binding protein A from Neisseria meningitidis serogroup B (strain ATCC BAA-335 / MC58).